Consider the following 540-residue polypeptide: ADP,ATP carrier protein 2 (540 aa).

The next 12 helical transmembrane spans lie at 23-43 (FSKFIPLFFLAFFVGVNYALL), 61-81 (VIPFLKVWGIVPGAVIVTMIY), 93-113 (VFISLVGGFLGFFALFATVIY), 150-170 (LYYVMSELWSSIVLSTLFWGV), 185-205 (ALINTGLNLSSVFAGEVSLWL), 222-242 (EVLLNITLLIVLAGGVILYLY), 292-312 (LLGIAVVVLSYNLVIHLFEVV), 334-354 (ITTLTGIVSALTGIFAAGQTI), 361-381 (IGALVPPLTMLITGALFFGAI), 389-409 (MIFGGILGISPLVLTAWLGGV), 455-475 (SGGSLVYQGLLIIFSSVAASL), and 477-497 (AITIVLLLALGSWIFVIAWLG).

Belongs to the ADP/ATP translocase tlc family.

It localises to the cell membrane. The protein is ADP,ATP carrier protein 2 (tlcB) of Chlamydia trachomatis serovar D (strain ATCC VR-885 / DSM 19411 / UW-3/Cx).